We begin with the raw amino-acid sequence, 205 residues long: Holliday junction branch migration complex subunit RuvA (205 aa).

Residues 1–64 are domain I; that stretch reads MIGKLRGLID…EDQIKLFGFR (64 aa). A domain II region spans residues 65–143; sequence SDVEREWFRL…AFANVDPGVV (79 aa). The segment at 144 to 154 is flexible linker; sequence RLSGAIEESRA. The segment at 154 to 205 is domain III; the sequence is APQPVADAISALINLGYGQPQAAAAIAAASRAAGDKAETAQLIRLGLKELAK.

Belongs to the RuvA family. In terms of assembly, homotetramer. Forms an RuvA(8)-RuvB(12)-Holliday junction (HJ) complex. HJ DNA is sandwiched between 2 RuvA tetramers; dsDNA enters through RuvA and exits via RuvB. An RuvB hexamer assembles on each DNA strand where it exits the tetramer. Each RuvB hexamer is contacted by two RuvA subunits (via domain III) on 2 adjacent RuvB subunits; this complex drives branch migration. In the full resolvosome a probable DNA-RuvA(4)-RuvB(12)-RuvC(2) complex forms which resolves the HJ.

The protein localises to the cytoplasm. Functionally, the RuvA-RuvB-RuvC complex processes Holliday junction (HJ) DNA during genetic recombination and DNA repair, while the RuvA-RuvB complex plays an important role in the rescue of blocked DNA replication forks via replication fork reversal (RFR). RuvA specifically binds to HJ cruciform DNA, conferring on it an open structure. The RuvB hexamer acts as an ATP-dependent pump, pulling dsDNA into and through the RuvAB complex. HJ branch migration allows RuvC to scan DNA until it finds its consensus sequence, where it cleaves and resolves the cruciform DNA. In Bradyrhizobium sp. (strain ORS 278), this protein is Holliday junction branch migration complex subunit RuvA.